The primary structure comprises 284 residues: Tropomyosin (284 aa).

Positions 1 to 284 (MDAIKKKMQA…DMTFTELIGN (284 aa)) form a coiled coil.

The protein belongs to the tropomyosin family. Homodimer.

Its function is as follows. Tropomyosin, in association with the troponin complex, plays a central role in the calcium dependent regulation of muscle contraction. The protein is Tropomyosin of Periplaneta fuliginosa (Smokybrown cockroach).